Here is a 1187-residue protein sequence, read N- to C-terminus: MSRVGECGGGGGCGARRGKAAHAGAGAVAGFLGCLLLVWAMGGCGRGCGGGGGEGVRDRVEEVAAQFNLSMSKLQALASLLSSPERECICKSGTINDDNPAHSMPDMSNCRLKNKPSGGNQNRLDNVIIQDCCANEDNYDKNNHENNLLQNAMQQDIGSPTTLWNQNNALSFNHGMIFSLSASLGIVVILVVITIFKRGKQANELCQHEKLLQTPSVKISRKWSKRALLLGVLVGLCSSVWIFSSMHADVVARRIENLENMCDERARMLQDQFNVSMNHVHALAILVSTFHHGKNPSAIDQKTFEDFTARTTFERPLMSGVAYALKVLHSERELFEQKLGWKIKKMETEDQSLVHDYNPEKLQPSPVQDEYAPVIFSQETVKHIISVDMMSGKEDRDNILRSRATGKGALTAPFPLLKSNHLGVVLTFTVYKYDLPPDATPEERIEATLGYLGASFDVPSLVERLLEQLASKQKIVVRLYDITNHTYPTKMYDSDVIASDDLHISNIDFGDPTRKHVMHCRFKHAPSLPWSAIMISSAVAIIVLLVGYIIYATLNSLEEAEDNYTTMRDLKGRAEAADVAKSQFLATVSHEIRTPMNGVLGMLQMLMDTELDTTQRDFVVTAQESGKSLINLINEVLDLAKIESGKIELEAVRFDVRDILDNVVSLFSEKSWAKGIELAVLVSDQVPDVLIGDPWRFRQIITNLVGNSMKFTEQGHIFIRVHLIEEVKRKMEALDDTSPENIEVTANSKNTMPYNTLSGLEVANNRKTLESFRMFKDSSDAIDSVNLLVTVEDTGIGITKDAQTRIFTPFMQADGSTSRTYGGTGIGLSITKRLVELMGGEIGFVSKPGVSSTFSFTAIFKENRKDPGDIKRYCPEPTPPDFQGMRALVVDGRCARAEVTMYHLRRLGIQCDLAATSESALSALLESCNSSVKSSLNMVLVDKEAWGEDSGLAFFRCLIDLRLKGTLKSWQTMPKFFLLAGSITPADSDCLRLAGYSNSIRKPLRLSTVAACLSKALGVGLTGRRSRDNSLVLRSVLTGKNILVVDDNAVNRIVAAGALKKYGAIVTCVDSGKEAISRLQPPHKFDACFMDVQMPEMDGFEATRLVRSVESKINDTIQAGEVSSEIYGNKAHWHVPILAMTADVIQATFEGCMECGMDGYVAKPFEEQQLYSAVAHFLEADATDPLT.

Topologically, residues 1–175 are extracellular; sequence MSRVGECGGG…QNNALSFNHG (175 aa). The helical transmembrane segment at 176-196 threads the bilayer; it reads MIFSLSASLGIVVILVVITIF. Over 197–226 the chain is Cytoplasmic; the sequence is KRGKQANELCQHEKLLQTPSVKISRKWSKR. The helical transmembrane segment at 227–247 threads the bilayer; it reads ALLLGVLVGLCSSVWIFSSMH. At 248-531 the chain is on the extracellular side; the sequence is ADVVARRIEN…FKHAPSLPWS (284 aa). One can recognise a CHASE domain in the interval 295–519; sequence NPSAIDQKTF…GDPTRKHVMH (225 aa). Residues 532–552 form a helical membrane-spanning segment; it reads AIMISSAVAIIVLLVGYIIYA. At 553 to 1187 the chain is on the cytoplasmic side; it reads TLNSLEEAED…LEADATDPLT (635 aa). Residues 587-862 enclose the Histidine kinase domain; it reads TVSHEIRTPM…TFSFTAIFKE (276 aa). Residue His-590 is modified to Phosphohistidine; by autocatalysis. Response regulatory domains follow at residues 886–1017 and 1041–1178; these read RALV…SKAL and NILV…AHFL. A 4-aspartylphosphate mark is found at Asp-942 and Asp-1091.

Activation probably requires a transfer of a phosphate group between a His in the transmitter domain and an Asp of the receiver domain. As to expression, highly expressed in young leaves and at lower levels in roots, mature leaves, stems and spikelets.

It is found in the cell membrane. The catalysed reaction is ATP + protein L-histidine = ADP + protein N-phospho-L-histidine.. Functionally, cytokinin receptor related to bacterial two-component regulators. Functions as a histidine kinase and transmits the stress signal to a downstream MAPK cascade. This chain is Probable histidine kinase 5, found in Oryza sativa subsp. japonica (Rice).